An 88-amino-acid polypeptide reads, in one-letter code: Small ribosomal subunit protein bS20 (88 aa).

The segment covering 1 to 21 (MANSKSAKKRALQSEKRRQHN) has biased composition (basic residues). The disordered stretch occupies residues 1–27 (MANSKSAKKRALQSEKRRQHNASRSSM).

This sequence belongs to the bacterial ribosomal protein bS20 family.

Functionally, binds directly to 16S ribosomal RNA. The chain is Small ribosomal subunit protein bS20 from Shewanella piezotolerans (strain WP3 / JCM 13877).